We begin with the raw amino-acid sequence, 394 residues long: Aromatic aminotransferase ISS1 (394 aa).

At Gly2 the chain carries N-acetylglycine. Substrate is bound at residue Gly38. Residues Tyr64, 98-99, Tyr123, Asn176, Tyr207, and 230-232 each bind pyridoxal 5'-phosphate; these read AN and SFS. 2 residues coordinate substrate: Tyr123 and Asn176. Lys233 is modified (N6-(pyridoxal phosphate)lysine). Arg241 contributes to the pyridoxal 5'-phosphate binding site. Residues Arg362 and Arg374 each contribute to the substrate site.

It belongs to the class-I pyridoxal-phosphate-dependent aminotransferase family. Homodimer. The cofactor is pyridoxal 5'-phosphate. As to expression, expressed in roots, cotyledons and flowers.

Its subcellular location is the cytoplasm. The enzyme catalyses a 2-oxocarboxylate + L-methionine = 4-methylsulfanyl-2-oxobutanoate + an L-alpha-amino acid. It catalyses the reaction L-tryptophan + 2-oxoglutarate = indole-3-pyruvate + L-glutamate. It carries out the reaction L-tyrosine + 2-oxoglutarate = 3-(4-hydroxyphenyl)pyruvate + L-glutamate. Functionally, coordinates and prevents auxin (IAA) and ethylene biosynthesis, thus regulating auxin homeostasis in young seedlings. Shows aminotransferase activity with methionine; can use the ethylene biosynthetic intermediate L-methionine (L-Met) as an amino donor and the auxin biosynthetic intermediate, indole-3-pyruvic acid (3-IPA) as an amino acceptor to produce L-tryptophan (L-Trp) and 2-oxo-4-methylthiobutyric acid (KMBA). Can also use tryptophan (Trp), phenylalanine (Phe), and tyrosine (Tyr) as substrates. Regulates tryptophan (Trp) homeostasis and catabolism in mature plants. Also possibly involved in the metabolism of other aromatic amino acids and phenylpropanoid homeostasis. This is Aromatic aminotransferase ISS1 from Arabidopsis thaliana (Mouse-ear cress).